Consider the following 285-residue polypeptide: Small ribosomal subunit protein uS2 (285 aa).

Positions 229–285 (RHNGKSNAAEEPMAEWERELLEQHEEQKSQDAAPAEQSAPAAEAPAETEQKDAPAAE) are disordered. A compositionally biased stretch (basic and acidic residues) spans 243-257 (EWERELLEQHEEQKS). A compositionally biased stretch (low complexity) spans 260-275 (AAPAEQSAPAAEAPAE). A compositionally biased stretch (basic and acidic residues) spans 276-285 (TEQKDAPAAE).

Belongs to the universal ribosomal protein uS2 family.

This is Small ribosomal subunit protein uS2 from Kocuria rhizophila (strain ATCC 9341 / DSM 348 / NBRC 103217 / DC2201).